The sequence spans 501 residues: Lysine--tRNA ligase (501 aa).

Positions 402 and 409 each coordinate Mg(2+).

Belongs to the class-II aminoacyl-tRNA synthetase family. In terms of assembly, homodimer. The cofactor is Mg(2+).

Its subcellular location is the cytoplasm. It catalyses the reaction tRNA(Lys) + L-lysine + ATP = L-lysyl-tRNA(Lys) + AMP + diphosphate. The protein is Lysine--tRNA ligase of Helicobacter pylori (strain P12).